The sequence spans 523 residues: Ribonuclease Y (523 aa).

The chain crosses the membrane as a helical span at residues 7-24; it reads LSSLASALLAGGGTYLVY. Residues 213–279 form the KH domain; it reads LINVVNLPND…TRTIEALVED (67 aa). The 94-residue stretch at 339–432 folds into the HD domain; it reads ALGHSLEVAN…VCAADALSAA (94 aa).

This sequence belongs to the RNase Y family.

It localises to the cell membrane. Endoribonuclease that initiates mRNA decay. The chain is Ribonuclease Y from Wolinella succinogenes (strain ATCC 29543 / DSM 1740 / CCUG 13145 / JCM 31913 / LMG 7466 / NCTC 11488 / FDC 602W) (Vibrio succinogenes).